The sequence spans 166 residues: MKFWLQGCAFVGCLLLTLPCCAARRRASGENLQQTRPIAAANLQWESYAEALEHSKQDHKPICLFFTGSDWCMWCIKMQDQILQSSEFKHFAGVHLHMVEVDFPQKNHQPEEQRQKNQELKAQYKVTGFPELVFIDAEGKQLARMGFEPGGGAAYVSKVKSALKLR.

Residues 1–22 (MKFWLQGCAFVGCLLLTLPCCA) form the signal peptide. The Thioredoxin domain occupies 32-166 (LQQTRPIAAA…SKVKSALKLR (135 aa)). Residues cysteine 72 and cysteine 75 are joined by a disulfide bond. Residue 73-74 (MW) coordinates substrate.

As to quaternary structure, monomer.

Its subcellular location is the periplasm. Catalyzes the reduction of disulfide bonds. May function in reducing intermolecular disulfides between proteins and small molecules in the periplasm, or keeping a specific subset of periplasmic proteins reduced, or maintaining the periplasm of Chlamydia in a generally reducing state. Seems to be unable to oxidize thiols into disulfides and does not display disulfide bond isomerase activity. The chain is Disulfide bond reductase DsbH (dsbH) from Chlamydia pneumoniae (Chlamydophila pneumoniae).